The sequence spans 321 residues: L-carnitine dehydrogenase (321 aa).

14–19 lines the NAD(+) pocket; that stretch reads GSGVIG.

This sequence belongs to the 3-hydroxyacyl-CoA dehydrogenase family. L-carnitine dehydrogenase subfamily. As to quaternary structure, homodimer.

Its subcellular location is the cytoplasm. It carries out the reaction carnitine + NAD(+) = 3-dehydrocarnitine + NADH + H(+). The protein operates within amine and polyamine metabolism; carnitine metabolism. Its function is as follows. Catalyzes the NAD(+)-dependent oxidation of L-carnitine to 3-dehydrocarnitine. In Pseudomonas putida (strain ATCC 47054 / DSM 6125 / CFBP 8728 / NCIMB 11950 / KT2440), this protein is L-carnitine dehydrogenase.